The primary structure comprises 103 residues: Large ribosomal subunit protein bL21 (103 aa).

This sequence belongs to the bacterial ribosomal protein bL21 family. Part of the 50S ribosomal subunit. Contacts protein L20.

Functionally, this protein binds to 23S rRNA in the presence of protein L20. The protein is Large ribosomal subunit protein bL21 of Acidovorax ebreus (strain TPSY) (Diaphorobacter sp. (strain TPSY)).